A 224-amino-acid chain; its full sequence is UPF0758 protein LCA_0852 (224 aa).

The region spanning 100–222 is the MPN domain; the sequence is VVASSQMVGQ…YLSLREEGYL (123 aa). Zn(2+) contacts are provided by H171, H173, and D184. The JAMM motif motif lies at 171–184; sequence HNHPSGQLAPSTQD.

Belongs to the UPF0758 family.

The protein is UPF0758 protein LCA_0852 of Latilactobacillus sakei subsp. sakei (strain 23K) (Lactobacillus sakei subsp. sakei).